The sequence spans 171 residues: Co-chaperone protein HscB homolog (171 aa).

The 73-residue stretch at 2–74 (NHFELFGLPP…ISRAEYLLSQ (73 aa)) folds into the J domain.

It belongs to the HscB family. As to quaternary structure, interacts with HscA and stimulates its ATPase activity.

In terms of biological role, co-chaperone involved in the maturation of iron-sulfur cluster-containing proteins. Seems to help targeting proteins to be folded toward HscA. This is Co-chaperone protein HscB homolog from Vibrio vulnificus (strain CMCP6).